Reading from the N-terminus, the 64-residue chain is Large ribosomal subunit protein bL35 (64 aa).

A disordered region spans residues Met-1–Thr-41.

Belongs to the bacterial ribosomal protein bL35 family.

The chain is Large ribosomal subunit protein bL35 from Nocardia farcinica (strain IFM 10152).